A 198-amino-acid polypeptide reads, in one-letter code: Recombination protein RecR (198 aa).

The segment at 57–72 (CSVCGHITENDPCYIC) adopts a C4-type zinc-finger fold. Positions 80 to 175 (SVICVVEDDK…KVTRLAQGLS (96 aa)) constitute a Toprim domain.

The protein belongs to the RecR family.

Its function is as follows. May play a role in DNA repair. It seems to be involved in an RecBC-independent recombinational process of DNA repair. It may act with RecF and RecO. The chain is Recombination protein RecR from Staphylococcus aureus (strain MSSA476).